A 285-amino-acid chain; its full sequence is HTH-type transcriptional regulator MurR (285 aa).

Residues 1-77 (MLYLTKIRNA…MALIGEYSAS (77 aa)) enclose the HTH rpiR-type domain. Residues 37–56 (SRKMAKQLGISQSSIVKFAQ) constitute a DNA-binding region (H-T-H motif). One can recognise an SIS domain in the interval 128–268 (IIEVISKAPF…FVGLVQLNDV (141 aa)).

Homotetramer.

It functions in the pathway amino-sugar metabolism; N-acetylmuramate degradation [regulation]. In terms of biological role, represses the expression of the murPQ operon involved in the uptake and degradation of N-acetylmuramic acid (MurNAc). Binds to two adjacent inverted repeats within the operator region. MurNAc 6-phosphate, the substrate of MurQ, is the specific inducer that weakens binding of MurR to the operator. This Escherichia coli O7:K1 (strain IAI39 / ExPEC) protein is HTH-type transcriptional regulator MurR.